The sequence spans 334 residues: Aspartate carbamoyltransferase catalytic subunit (334 aa).

Positions 71 and 72 each coordinate carbamoyl phosphate. Lysine 99 is a binding site for L-aspartate. Arginine 121, histidine 151, and glutamine 154 together coordinate carbamoyl phosphate. Residues arginine 184 and arginine 239 each coordinate L-aspartate. Residues glycine 280 and proline 281 each coordinate carbamoyl phosphate.

It belongs to the aspartate/ornithine carbamoyltransferase superfamily. ATCase family. As to quaternary structure, heterododecamer (2C3:3R2) of six catalytic PyrB chains organized as two trimers (C3), and six regulatory PyrI chains organized as three dimers (R2).

The catalysed reaction is carbamoyl phosphate + L-aspartate = N-carbamoyl-L-aspartate + phosphate + H(+). Its pathway is pyrimidine metabolism; UMP biosynthesis via de novo pathway; (S)-dihydroorotate from bicarbonate: step 2/3. In terms of biological role, catalyzes the condensation of carbamoyl phosphate and aspartate to form carbamoyl aspartate and inorganic phosphate, the committed step in the de novo pyrimidine nucleotide biosynthesis pathway. This Pseudomonas syringae pv. tomato (strain ATCC BAA-871 / DC3000) protein is Aspartate carbamoyltransferase catalytic subunit.